The primary structure comprises 292 residues: Acetylglutamate kinase (292 aa).

Residues glycine 64 to glycine 65, arginine 86, and asparagine 190 contribute to the substrate site.

This sequence belongs to the acetylglutamate kinase family. ArgB subfamily.

Its subcellular location is the cytoplasm. The catalysed reaction is N-acetyl-L-glutamate + ATP = N-acetyl-L-glutamyl 5-phosphate + ADP. It functions in the pathway amino-acid biosynthesis; L-arginine biosynthesis; N(2)-acetyl-L-ornithine from L-glutamate: step 2/4. In terms of biological role, catalyzes the ATP-dependent phosphorylation of N-acetyl-L-glutamate. The protein is Acetylglutamate kinase of Geobacter sp. (strain M21).